Reading from the N-terminus, the 341-residue chain is Bis(monoacylglycero)phosphate synthase CLN5 (341 aa).

Topologically, residues 1 to 13 (MLRGGPCGAHWRP) are cytoplasmic. The chain crosses the membrane as a helical; Signal-anchor for type II membrane protein span at residues 14–30 (ALALALLGLATILGASP). The Lumenal segment spans residues 31 to 341 (TSGQRWPVPY…PTRHTTFTDL (311 aa)). Cystine bridges form between Cys-53–Cys-142 and Cys-60–Cys-148. Residue His-100 is the Proton acceptor of the active site. 4 N-linked (GlcNAc...) asparagine glycosylation sites follow: Asn-113, Asn-126, Asn-161, and Asn-186. Residue Cys-214 is the Nucleophile; Acyl-thioester intermediate of the active site. Asn-238, Asn-254, and Asn-264 each carry an N-linked (GlcNAc...) asparagine glycan. The segment at 287–326 (FLMNFLKIFDTVIIHRQFYLFYNFEYWFLPMKPPFVKITY) is membrane-anchoring.

The protein belongs to the CLN5 family. As to quaternary structure, multimer. Interacts with PPT1, TPP1, CLN3, CLN6, CLN8, ATP5F1A and ATP5F1B. Interacts with SORT1, RAB5A and RAB7A. Post-translationally, N-glycosylated with both high mannose and complex type sugars. Glycosylation is important for proper folding and trafficking to the lysosomes. In terms of processing, the type II membrane signal anchor is proteolytically cleaved to produce a mature form that is transported to the lysosomes (Bis(monoacylglycero)phosphate synthase CLN5, secreted form). Can undergo proteolytic cleavage at the C-terminus, probably by a cysteine protease and may involve the removal of approximately 10-15 residues from the C-terminal end. As to expression, heart, kidney, liver, spleen, muscle and rectum (at protein level).

The protein localises to the lysosome. The protein resides in the membrane. It carries out the reaction S-hexadecanoyl-L-cysteinyl-[protein] + H2O = L-cysteinyl-[protein] + hexadecanoate + H(+). It catalyses the reaction 2 1-acyl-sn-glycero-3-phospho-(1'-sn-glycerol) = 1-acyl-sn-glycero-3-phospho-(3'-acyl-sn-1'-glycerol) + sn-glycero-3-phospho-(1'-sn-glycerol). The enzyme catalyses 2 1-(9Z-octadecenoyl)-sn-glycero-3-phospho-(1'-sn-glycerol) = 1-(9Z-octadecenoyl)-sn-glycero-3-phospho-(3'-(9Z-octadecenoyl)-1'-sn-glycerol) + sn-glycero-3-phospho-(1'-sn-glycerol). The catalysed reaction is 2 1-octadecanoyl-sn-glycero-3-phospho-(1'-sn-glycerol) = 1-octadecanoyl-sn-glycero-3-phospho-(3'-octadecanoyl-1'-sn-glycerol) + sn-glycero-3-phospho-(1'-sn-glycerol). It carries out the reaction 2 1-hexadecanoyl-sn-glycero-3-phospho-(1'-sn-glycerol) = 1-hexadecanoyl-sn-glycero-3-phospho-(3'-hexadecanoyl-1'-sn-glycerol) + sn-glycero-3-phospho-(1'-sn-glycerol). It catalyses the reaction 2 1-tetradecanoyl-sn-glycero-3-phospho-(1'-sn-glycerol) = 1-tetradecanoyl-sn-glycero-3-phospho-(3'-tetradecanoyl-1'-sn-glycerol) + sn-glycero-3-phospho-(1'-sn-glycerol). In terms of biological role, catalyzes the synthesis of bis(monoacylglycero)phosphate (BMP) via transacylation of 2 molecules of lysophosphatidylglycerol (LPG). BMP also known as lysobisphosphatidic acid plays a key role in the formation of intraluminal vesicles and in maintaining intracellular cholesterol homeostasis. Can use only LPG as the exclusive lysophospholipid acyl donor for base exchange and displays BMP synthase activity towards various LPGs (LPG 14:0, LPG 16:0, LPG 18:0, LPG 18:1) with a higher preference for longer chain lengths. Plays a role in influencing the retrograde trafficking of lysosomal sorting receptors SORT1 and IGF2R from the endosomes to the trans-Golgi network by controlling the recruitment of retromer complex to the endosomal membrane. Regulates the localization and activation of RAB7A which is required to recruit the retromer complex to the endosomal membrane. Its function is as follows. Exhibits palmitoyl protein thioesterase (S-depalmitoylation) activity in vitro and most likely plays a role in protein S-depalmitoylation. This Mus musculus (Mouse) protein is Bis(monoacylglycero)phosphate synthase CLN5 (Cln5).